We begin with the raw amino-acid sequence, 320 residues long: 1,5-anhydro-D-fructose reductase (320 aa).

Residue Asp35 participates in NADP(+) binding. Residue Tyr40 is the Proton donor of the active site. Position 102 (His102) interacts with substrate. NADP(+) is bound by residues Gln194 and 265-277 (IPGS…IKEN).

The protein belongs to the aldo/keto reductase family. In terms of assembly, monomer. As to expression, specifically expressed in testis. Expressed in testicular germ cells and testis interstitial cells.

The protein localises to the cytoplasm. The catalysed reaction is 1,5-anhydro-D-glucitol + NADP(+) = 1,5-anhydro-D-fructose + NADPH + H(+). With respect to regulation, inhibited by p-chloromercuribenzoic acid and alkyliodines. In terms of biological role, catalyzes the NADPH-dependent reduction of 1,5-anhydro-D-fructose (AF) to 1,5-anhydro-D-glucitol. Has low NADPH-dependent reductase activity towards 9,10-phenanthrenequinone (in vitro). The polypeptide is 1,5-anhydro-D-fructose reductase (AKR1E2) (Homo sapiens (Human)).